The following is a 299-amino-acid chain: ATP phosphoribosyltransferase (299 aa).

Belongs to the ATP phosphoribosyltransferase family. Long subfamily. Mg(2+) is required as a cofactor.

The protein resides in the cytoplasm. It catalyses the reaction 1-(5-phospho-beta-D-ribosyl)-ATP + diphosphate = 5-phospho-alpha-D-ribose 1-diphosphate + ATP. It participates in amino-acid biosynthesis; L-histidine biosynthesis; L-histidine from 5-phospho-alpha-D-ribose 1-diphosphate: step 1/9. With respect to regulation, feedback inhibited by histidine. Functionally, catalyzes the condensation of ATP and 5-phosphoribose 1-diphosphate to form N'-(5'-phosphoribosyl)-ATP (PR-ATP). Has a crucial role in the pathway because the rate of histidine biosynthesis seems to be controlled primarily by regulation of HisG enzymatic activity. The sequence is that of ATP phosphoribosyltransferase from Shewanella piezotolerans (strain WP3 / JCM 13877).